A 240-amino-acid chain; its full sequence is tRNA (guanine-N(1)-)-methyltransferase (240 aa).

S-adenosyl-L-methionine is bound by residues Gly-108 and 127-132 (IGDYVL).

Belongs to the RNA methyltransferase TrmD family. Homodimer.

The protein localises to the cytoplasm. It carries out the reaction guanosine(37) in tRNA + S-adenosyl-L-methionine = N(1)-methylguanosine(37) in tRNA + S-adenosyl-L-homocysteine + H(+). Functionally, specifically methylates guanosine-37 in various tRNAs. The protein is tRNA (guanine-N(1)-)-methyltransferase of Lactobacillus johnsonii (strain CNCM I-12250 / La1 / NCC 533).